A 681-amino-acid chain; its full sequence is Pseudohemocyanin-2 (681 aa).

The signal sequence occupies residues 1–21; sequence VLLCSLVAATAAWPYFGGFQR. 4 N-linked (GlcNAc...) asparagine glycosylation sites follow: N98, N191, N228, and N624.

This sequence belongs to the tyrosinase family. Hemocyanin subfamily. As to quaternary structure, hexamer. Strongly expressed in ovaries. Also expressed in heart. Not detected in hepatopancreas, gills, connective tissue or muscle.

Does not function as a hemocyanin. The polypeptide is Pseudohemocyanin-2 (Homarus americanus (American lobster)).